Here is a 176-residue protein sequence, read N- to C-terminus: Peptide methionine sulfoxide reductase MsrA (176 aa).

The active site involves cysteine 12.

The protein belongs to the MsrA Met sulfoxide reductase family.

The enzyme catalyses L-methionyl-[protein] + [thioredoxin]-disulfide + H2O = L-methionyl-(S)-S-oxide-[protein] + [thioredoxin]-dithiol. It catalyses the reaction [thioredoxin]-disulfide + L-methionine + H2O = L-methionine (S)-S-oxide + [thioredoxin]-dithiol. Its function is as follows. Has an important function as a repair enzyme for proteins that have been inactivated by oxidation. Catalyzes the reversible oxidation-reduction of methionine sulfoxide in proteins to methionine. The chain is Peptide methionine sulfoxide reductase MsrA from Thermus thermophilus (strain ATCC 27634 / DSM 579 / HB8).